Here is a 246-residue protein sequence, read N- to C-terminus: Homeobox protein Crxos (246 aa).

2 DNA-binding regions (homeobox) span residues 22 to 72 and 129 to 182; these read WEQL…EMRP and ELTD…RGYR. Positions 163–177 match the Nuclear localization signal motif; that stretch reads RKDLIRSWFITQRHR.

Belongs to the paired homeobox family. As to expression, specifically expressed during the preimplantation stages of embryonic development, between the four-cell to eight-cell stage and the morula stage. Expressed in adult testis. In terms of tissue distribution, detected in early embryos; expression decreases gradually with embryonic development. Also expressed in extraembryonic tissues after E14.5, expression level increases drastically until E18.5, immediately before partum.

The protein resides in the nucleus. Transcription factor that acts as a regulator of embryonic stem cell differentiation during the preimplantation stages of embryonic development. Functionally, transcription factor that acts as a positive regulator of embryonic stem cell differentiation. Its function is as follows. Transcription factor that promotes embryonic stem cell pluripotency. In terms of biological role, transcription factor that promotes embryonic stem cell pluripotency. Also involved in extraembryonic tissues development by promoting the expression of placental prolactin family genes. The chain is Homeobox protein Crxos from Mus musculus (Mouse).